The following is a 75-amino-acid chain: Exodeoxyribonuclease 7 small subunit (75 aa).

This sequence belongs to the XseB family. Heterooligomer composed of large and small subunits.

It localises to the cytoplasm. The enzyme catalyses Exonucleolytic cleavage in either 5'- to 3'- or 3'- to 5'-direction to yield nucleoside 5'-phosphates.. Bidirectionally degrades single-stranded DNA into large acid-insoluble oligonucleotides, which are then degraded further into small acid-soluble oligonucleotides. This chain is Exodeoxyribonuclease 7 small subunit, found in Chlamydia abortus (strain DSM 27085 / S26/3) (Chlamydophila abortus).